The chain runs to 418 residues: UDP-N-acetylglucosamine 1-carboxyvinyltransferase (418 aa).

Phosphoenolpyruvate is bound at residue 22–23 (KN). Position 92 (Arg92) interacts with UDP-N-acetyl-alpha-D-glucosamine. The Proton donor role is filled by Cys116. Cys116 carries the 2-(S-cysteinyl)pyruvic acid O-phosphothioketal modification. UDP-N-acetyl-alpha-D-glucosamine is bound by residues 121 to 125 (RPIDL), Asp305, and Leu327.

This sequence belongs to the EPSP synthase family. MurA subfamily.

It localises to the cytoplasm. The catalysed reaction is phosphoenolpyruvate + UDP-N-acetyl-alpha-D-glucosamine = UDP-N-acetyl-3-O-(1-carboxyvinyl)-alpha-D-glucosamine + phosphate. It participates in cell wall biogenesis; peptidoglycan biosynthesis. Its function is as follows. Cell wall formation. Adds enolpyruvyl to UDP-N-acetylglucosamine. The protein is UDP-N-acetylglucosamine 1-carboxyvinyltransferase of Campylobacter jejuni subsp. jejuni serotype O:6 (strain 81116 / NCTC 11828).